A 1026-amino-acid polypeptide reads, in one-letter code: Multidrug resistance protein MdtC (1026 aa).

Over 1–6 (MRFFAL) the chain is Cytoplasmic. A helical membrane pass occupies residues 7-29 (FIYRPVATILIAAAITLCGILGF). At 30-335 (RLLPVAPLPQ…TIRASLQEVE (306 aa)) the chain is on the periplasmic side. A helical membrane pass occupies residues 336–353 (ETLAISVALVILVVFLFL). The Cytoplasmic segment spans residues 354–359 (RSGRAT). Residues 360-379 (LIPAVAVPVSLIGTFAAMYL) traverse the membrane as a helical segment. The Periplasmic segment spans residues 380-388 (CGFSLNNLS). A helical membrane pass occupies residues 389–411 (LMALTIATGFVVDDAIVVLENIA). Residues 412–430 (RHLEARMKPLQAALQGTRE) are Cytoplasmic-facing. A helical transmembrane segment spans residues 431–453 (VGFTVISMSLSLVAVFLPLLLMG). The Periplasmic portion of the chain corresponds to 454–467 (GLPGRLLREFAVTL). The helical transmembrane segment at 468 to 490 (SVAIGISLVVSLTLTPMMCGWML) threads the bilayer. Topologically, residues 491–852 (KSSKPRTQPR…QVFQQTMNSQ (362 aa)) are cytoplasmic. Residues 853–875 (LILIVAAIATVYIVLGILYESYV) form a helical membrane-spanning segment. The Periplasmic segment spans residues 876-894 (HPLTILSTLPSAGVGALLA). Residues 895–917 (LELFNAPFSLIALIGIMLLIGIV) traverse the membrane as a helical segment. Topologically, residues 918–947 (KKNAIMMVDFALEAQRSGGLTPEQAIFQAC) are cytoplasmic. Residues 948 to 970 (LLRFRPIMMTTLAALFGALPLVL) form a helical membrane-spanning segment. Residues 971–984 (SGGDGSELRQPLGI) are Periplasmic-facing. Residues 985 to 1007 (TIVGGLVMSQLLTLYTTPVVYLF) form a helical membrane-spanning segment. The Cytoplasmic segment spans residues 1008–1026 (FDRLRLRFSRKNSKPVVEI).

Belongs to the resistance-nodulation-cell division (RND) (TC 2.A.6) family. MdtC subfamily. As to quaternary structure, part of a tripartite efflux system composed of MdtA, MdtB and MdtC. MdtC forms a heteromultimer with MdtB.

The protein localises to the cell inner membrane. The sequence is that of Multidrug resistance protein MdtC from Salmonella typhi.